We begin with the raw amino-acid sequence, 149 residues long: Calmodulin (149 aa).

Ala-2 is modified (N-acetylalanine). EF-hand domains lie at Glu-8–Asn-43, Pro-44–Glu-79, Asp-81–Lys-116, and Leu-117–Lys-149. Asp-21, Asp-23, Asp-25, Thr-27, Glu-32, Asp-57, Asp-59, Asn-61, Thr-63, Glu-68, Asp-94, Asp-96, Asn-98, and Glu-105 together coordinate Ca(2+). The residue at position 116 (Lys-116) is an N6,N6,N6-trimethyllysine. Residues Asp-130, Asp-132, Asp-134, Gln-136, and Glu-141 each coordinate Ca(2+).

The protein belongs to the calmodulin family.

In terms of biological role, calmodulin mediates the control of a large number of enzymes, ion channels and other proteins by Ca(2+). Among the enzymes to be stimulated by the calmodulin-Ca(2+) complex are a number of protein kinases and phosphatases. This is Calmodulin from Suberites domuncula (Sponge).